A 318-amino-acid chain; its full sequence is Protein W (318 aa).

2 disordered regions span residues 1 to 23 (MDQD…GGRE) and 38 to 318 (SEPT…KKGA). The segment covering 7–20 (ILKEDSEVEREAPG) has biased composition (basic and acidic residues). Polar residues predominate over residues 50 to 59 (LHNTINTPQG). Ser-68 carries the phosphoserine; by host modification. The span at 83–101 (RSGEESRVSGRTSKPEAEA) shows a compositional bias: basic and acidic residues. At Ser-125 the chain carries Phosphoserine; by host. Residues 150–168 (GIEDENREMAAHPDKRGED) show a composition bias toward basic and acidic residues. A compositionally biased stretch (polar residues) spans 191–206 (ASNNGRSMEPGSSHSA). Residues Ser-192, Ser-249, Ser-257, and Ser-260 each carry the phosphoserine; by host modification.

In Sendai virus (strain Z) (SeV), this protein is Protein W (P/V/C).